Reading from the N-terminus, the 391-residue chain is MSRFLICSFALVLLYPAGIDMYLVGLPRIAADLNASEAQLHIAFSVYLAGMAAAMLFAGKVADRSGRKPVAIPGAALFIIASVFCSLAETSTLFLAGRFLQGLGAGCCYVVAFAILRDTLDDRRRAKVLSLLNGITCIIPVLAPVLGHLIMLKFPWQSLFWAMAMMGIAVLMLSLFILKETRPASPAASDKPRENSESLLNRFFLSRVVITTLSVSVILTFVNTSPVLLMEIMGFERGEYATIMALTAGVSMTFSFSTPFALGIFKPRTLMITSQVLFLAAGITLAVSPSHAVSLFGITLICAGFSVGFGVAMSQALGPFSLRAGVASSTLGIAQVCGSSLWIWLAAVVGIGAWNMLIGILIACSIVSLLLIMFVAPGRPVAAHEEIHHHA.

Topologically, residues 1–3 are cytoplasmic; it reads MSR. The helical transmembrane segment at 4-24 threads the bilayer; that stretch reads FLICSFALVLLYPAGIDMYLV. The Periplasmic segment spans residues 25 to 41; that stretch reads GLPRIAADLNASEAQLH. A helical transmembrane segment spans residues 42–62; sequence IAFSVYLAGMAAAMLFAGKVA. Residues 63–68 are Cytoplasmic-facing; it reads DRSGRK. Residues 69 to 89 form a helical membrane-spanning segment; that stretch reads PVAIPGAALFIIASVFCSLAE. At 90–92 the chain is on the periplasmic side; the sequence is TST. A helical transmembrane segment spans residues 93–113; sequence LFLAGRFLQGLGAGCCYVVAF. Residues 114–130 are Cytoplasmic-facing; it reads AILRDTLDDRRRAKVLS. A helical transmembrane segment spans residues 131–151; that stretch reads LLNGITCIIPVLAPVLGHLIM. Residues 152–157 are Periplasmic-facing; the sequence is LKFPWQ. Residues 158 to 178 form a helical membrane-spanning segment; sequence SLFWAMAMMGIAVLMLSLFIL. The Cytoplasmic portion of the chain corresponds to 179 to 202; that stretch reads KETRPASPAASDKPRENSESLLNR. The chain crosses the membrane as a helical span at residues 203–222; the sequence is FFLSRVVITTLSVSVILTFV. The Periplasmic segment spans residues 223 to 244; the sequence is NTSPVLLMEIMGFERGEYATIM. The chain crosses the membrane as a helical span at residues 245 to 265; that stretch reads ALTAGVSMTFSFSTPFALGIF. Over 266–268 the chain is Cytoplasmic; sequence KPR. Residues 269-289 traverse the membrane as a helical segment; it reads TLMITSQVLFLAAGITLAVSP. The Periplasmic portion of the chain corresponds to 290-292; that stretch reads SHA. Residues 293–313 form a helical membrane-spanning segment; the sequence is VSLFGITLICAGFSVGFGVAM. The Cytoplasmic segment spans residues 314–330; the sequence is SQALGPFSLRAGVASST. A helical transmembrane segment spans residues 331-351; the sequence is LGIAQVCGSSLWIWLAAVVGI. Residues 352 to 355 lie on the Periplasmic side of the membrane; it reads GAWN. A helical membrane pass occupies residues 356 to 376; that stretch reads MLIGILIACSIVSLLLIMFVA. The Cytoplasmic portion of the chain corresponds to 377 to 391; the sequence is PGRPVAAHEEIHHHA.

Belongs to the major facilitator superfamily. DHA1 family. MdtL (TC 2.A.1.2.22) subfamily.

Its subcellular location is the cell inner membrane. The protein is Multidrug resistance protein MdtL (mdtL) of Shigella flexneri.